The sequence spans 209 residues: MIGLVGKKVGMTRIFTEDGVSIPVTVIEVEANRVTQVKDLANDGYRAIQVTTGAKKANRVTKPEAGHFAKAGVEAGRGLWEFRLAEGEEFTVGQSISVELFADVKKVDVTGTSKGKGFAGTVKRWNFRTQDATHGNSLSHRVPGSIGQNQTPGKVFKGKKMAGQMGNERVTVQSLDVVRVDAERNLLLVKGAVPGATGSDLIVKPAVKA.

Q150 carries the N5-methylglutamine modification.

This sequence belongs to the universal ribosomal protein uL3 family. Part of the 50S ribosomal subunit. Forms a cluster with proteins L14 and L19. Post-translationally, methylated by PrmB.

Its function is as follows. One of the primary rRNA binding proteins, it binds directly near the 3'-end of the 23S rRNA, where it nucleates assembly of the 50S subunit. This is Large ribosomal subunit protein uL3 from Escherichia coli O139:H28 (strain E24377A / ETEC).